Consider the following 105-residue polypeptide: UPF0145 protein CPS_2458 (105 aa).

It belongs to the UPF0145 family.

The chain is UPF0145 protein CPS_2458 from Colwellia psychrerythraea (strain 34H / ATCC BAA-681) (Vibrio psychroerythus).